The primary structure comprises 517 residues: Benzoate 4-monooxygenase bphA (517 aa).

A helical transmembrane segment spans residues 4-24 (LLLSPYGAYLGLALLVLYYLL). N-linked (GlcNAc...) asparagine glycans are attached at residues Asn-282 and Asn-325. Cys-461 lines the heme pocket.

It belongs to the cytochrome P450 family. Heme serves as cofactor.

It localises to the membrane. The enzyme catalyses benzoate + reduced [NADPH--hemoprotein reductase] + O2 = 4-hydroxybenzoate + oxidized [NADPH--hemoprotein reductase] + H2O + H(+). Functionally, cytochrome P450 monooxygenase; part of the benzoic acid degradation pathway also known as the protocatechuic acid pathway. Benzoic acid debradation begins with the conversion of benzoic acid into 4-hydroxybenzoic acid through hydroxylation by the benzoate-4-monooxygenase bphA, and its partner NADPH-cytochrome P450 reductase cprA which act as a mediator in electron donation from NADPH. 4-Hydroxybenzoic acid is then converted into 3,4-dihydroxybenzoic acid (also called protocatechuic acid) by the p-hydroxybenzoate-m-hydroxylase phhA. Protocatechuic acid is converted into 3-carboxy-cis,cis-muconic acid by the intradiol ring-cleavage dioxygenase prcA, which is further metabolized through the 3-oxoadipate pathway to finally enter the tricarboxylic acid cycle (TCA). Its function is as follows. Responsible for cytochrome P450 dependent benzoate hydroxylation in microsomes; requires cprA as the mediator in electron donation from NADPH. This chain is Benzoate 4-monooxygenase bphA, found in Aspergillus niger.